A 493-amino-acid chain; its full sequence is Rho guanine nucleotide exchange factor 9 (493 aa).

The SH3 domain occupies 15 to 74; that stretch reads DSIVSAEAVWDHVTMANRGVAFKAGDVIKVLDASNKDWWWGQIDDEEGWFPASFVRLWVN. The interaction with GPHN stretch occupies residues 107 to 117; it reads RDQMRANVINE. The 185-residue stretch at 110–294 folds into the DH domain; that stretch reads MRANVINEIM…RNVTQQINER (185 aa). The PH domain occupies 325–432; it reads ELIYTGEMAW…WLRAFREERK (108 aa). The tract at residues 453 to 473 is disordered; that stretch reads AMTVRKASKQKGRVGEEENQS.

As to quaternary structure, interacts with GPHN. In terms of tissue distribution, detected in brain, throughout the gray matter. Detected at low levels in heart and skeletal muscle.

It localises to the cytoplasm. Its subcellular location is the postsynaptic density. Acts as a guanine nucleotide exchange factor (GEF) for CDC42. Promotes formation of GPHN clusters. This Rattus norvegicus (Rat) protein is Rho guanine nucleotide exchange factor 9 (Arhgef9).